Here is a 210-residue protein sequence, read N- to C-terminus: Probable peroxygenase 7 (210 aa).

The interval 1–24 (MSHQTVALASKAKSPKPKRGKLDK) is disordered. Residues 25 to 60 (EKMTALEKHVSFFDRNKDGTVYPWETYQGFRALGTG) enclose the EF-hand domain. H33 is a heme binding site. Ca(2+) is bound by residues D38, N40, D42, T44, and E49. The Proline-knot signature appears at 81 to 90 (PGKGFSPLFP). The residue at position 188 (S188) is a Phosphoserine.

The protein belongs to the caleosin family. As to quaternary structure, homodimer. Requires heme b as cofactor. The cofactor is Ca(2+). As to expression, expressed in pollen coat.

It localises to the secreted. It carries out the reaction RH + ROOH = ROH + ROH.. In terms of biological role, probable calcium-binding peroxygenase. May be involved in pollination. The polypeptide is Probable peroxygenase 7 (PXG7) (Arabidopsis thaliana (Mouse-ear cress)).